Consider the following 232-residue polypeptide: YlmG homolog protein 1-1, chloroplastic (232 aa).

The N-terminal 16 residues, 1 to 16 (MAAITALTLRSPVYLP), are a transit peptide targeting the chloroplast. The next 2 membrane-spanning stretches (helical) occupy residues 147–167 (LTVV…VLMV) and 201–221 (IIPP…AVLG).

Belongs to the YggT family.

It is found in the plastid. Its subcellular location is the chloroplast thylakoid membrane. Its function is as follows. Required for the proper distribution of nucleoids in chloroplasts. The nucleoid partitioning by YLMG1-1 may be related to chloroplast division processes. This chain is YlmG homolog protein 1-1, chloroplastic, found in Arabidopsis thaliana (Mouse-ear cress).